The chain runs to 179 residues: Large ribosomal subunit protein uL5 (179 aa).

This sequence belongs to the universal ribosomal protein uL5 family. As to quaternary structure, part of the 50S ribosomal subunit; part of the 5S rRNA/L5/L18/L25 subcomplex. Contacts the 5S rRNA and the P site tRNA. Forms a bridge to the 30S subunit in the 70S ribosome.

In terms of biological role, this is one of the proteins that bind and probably mediate the attachment of the 5S RNA into the large ribosomal subunit, where it forms part of the central protuberance. In the 70S ribosome it contacts protein S13 of the 30S subunit (bridge B1b), connecting the 2 subunits; this bridge is implicated in subunit movement. Contacts the P site tRNA; the 5S rRNA and some of its associated proteins might help stabilize positioning of ribosome-bound tRNAs. This chain is Large ribosomal subunit protein uL5, found in Pelobacter propionicus (strain DSM 2379 / NBRC 103807 / OttBd1).